The chain runs to 303 residues: Probable 5-dehydro-4-deoxyglucarate dehydratase (303 aa).

Belongs to the DapA family.

It carries out the reaction 5-dehydro-4-deoxy-D-glucarate + H(+) = 2,5-dioxopentanoate + CO2 + H2O. It participates in carbohydrate acid metabolism; D-glucarate degradation; 2,5-dioxopentanoate from D-glucarate: step 2/2. This is Probable 5-dehydro-4-deoxyglucarate dehydratase from Agrobacterium fabrum (strain C58 / ATCC 33970) (Agrobacterium tumefaciens (strain C58)).